The following is a 404-amino-acid chain: Deoxyguanosinetriphosphate triphosphohydrolase-like protein (404 aa).

The tract at residues 1 to 33 (MSVGMAAPRAAFSCDPDRSRGRQFAEPPSSNRS) is disordered. Residues 69–217 (RLTHSLEVAQ…AALADDIAYD (149 aa)) enclose the HD domain.

The protein belongs to the dGTPase family. Type 2 subfamily.

The polypeptide is Deoxyguanosinetriphosphate triphosphohydrolase-like protein (Rhodopseudomonas palustris (strain HaA2)).